Here is a 471-residue protein sequence, read N- to C-terminus: ATP synthase subunit beta (471 aa).

156–163 (GGAGVGKT) lines the ATP pocket.

Belongs to the ATPase alpha/beta chains family. In terms of assembly, F-type ATPases have 2 components, CF(1) - the catalytic core - and CF(0) - the membrane proton channel. CF(1) has five subunits: alpha(3), beta(3), gamma(1), delta(1), epsilon(1). CF(0) has three main subunits: a(1), b(2) and c(9-12). The alpha and beta chains form an alternating ring which encloses part of the gamma chain. CF(1) is attached to CF(0) by a central stalk formed by the gamma and epsilon chains, while a peripheral stalk is formed by the delta and b chains.

It is found in the cell membrane. The catalysed reaction is ATP + H2O + 4 H(+)(in) = ADP + phosphate + 5 H(+)(out). In terms of biological role, produces ATP from ADP in the presence of a proton gradient across the membrane. The catalytic sites are hosted primarily by the beta subunits. The polypeptide is ATP synthase subunit beta (Staphylococcus carnosus (strain TM300)).